The chain runs to 431 residues: Adenylosuccinate lyase (431 aa).

Residues 4–5 (RY), 67–69 (RHD), and 93–94 (TS) each bind N(6)-(1,2-dicarboxyethyl)-AMP. Histidine 141 serves as the catalytic Proton donor/acceptor. N(6)-(1,2-dicarboxyethyl)-AMP is bound at residue glutamine 212. The Proton donor/acceptor role is filled by serine 262. N(6)-(1,2-dicarboxyethyl)-AMP is bound by residues serine 263, 268–270 (KRN), asparagine 276, and 307–311 (SAERI).

It belongs to the lyase 1 family. Adenylosuccinate lyase subfamily. As to quaternary structure, homodimer and homotetramer. Residues from neighboring subunits contribute catalytic and substrate-binding residues to each active site.

The catalysed reaction is N(6)-(1,2-dicarboxyethyl)-AMP = fumarate + AMP. The enzyme catalyses (2S)-2-[5-amino-1-(5-phospho-beta-D-ribosyl)imidazole-4-carboxamido]succinate = 5-amino-1-(5-phospho-beta-D-ribosyl)imidazole-4-carboxamide + fumarate. Its pathway is purine metabolism; AMP biosynthesis via de novo pathway; AMP from IMP: step 2/2. The protein operates within purine metabolism; IMP biosynthesis via de novo pathway; 5-amino-1-(5-phospho-D-ribosyl)imidazole-4-carboxamide from 5-amino-1-(5-phospho-D-ribosyl)imidazole-4-carboxylate: step 2/2. Its function is as follows. Catalyzes two reactions in de novo purine nucleotide biosynthesis. Catalyzes the breakdown of 5-aminoimidazole- (N-succinylocarboxamide) ribotide (SAICAR or 2-[5-amino-1-(5-phospho-beta-D-ribosyl)imidazole-4-carboxamido]succinate) to 5-aminoimidazole-4-carboxamide ribotide (AICAR or 5-amino-1-(5-phospho-beta-D-ribosyl)imidazole-4-carboxamide) and fumarate, and of adenylosuccinate (ADS or N(6)-(1,2-dicarboxyethyl)-AMP) to adenosine monophosphate (AMP) and fumarate. In Staphylococcus saprophyticus subsp. saprophyticus (strain ATCC 15305 / DSM 20229 / NCIMB 8711 / NCTC 7292 / S-41), this protein is Adenylosuccinate lyase (purB).